The chain runs to 153 residues: Large ribosomal subunit protein uL22 (153 aa).

Belongs to the universal ribosomal protein uL22 family. Part of the 50S ribosomal subunit.

In terms of biological role, this protein binds specifically to 23S rRNA. It makes multiple contacts with different domains of the 23S rRNA in the assembled 50S subunit and ribosome. Functionally, the globular domain of the protein is located near the polypeptide exit tunnel on the outside of the subunit, while an extended beta-hairpin is found that lines the wall of the exit tunnel in the center of the 70S ribosome. The sequence is that of Large ribosomal subunit protein uL22 from Methanococcus maripaludis (strain DSM 14266 / JCM 13030 / NBRC 101832 / S2 / LL).